The sequence spans 179 residues: 3-hydroxyanthranilate 3,4-dioxygenase (179 aa).

Arg47 is a binding site for O2. Residues His51, Glu57, and His96 each contribute to the Fe cation site. A substrate-binding site is contributed by Glu57. 2 residues coordinate substrate: Arg100 and Glu110. Fe cation contacts are provided by Cys125, Cys128, Cys162, and Cys165.

Belongs to the 3-HAO family. Requires Fe(2+) as cofactor.

It carries out the reaction 3-hydroxyanthranilate + O2 = (2Z,4Z)-2-amino-3-carboxymuconate 6-semialdehyde. It participates in cofactor biosynthesis; NAD(+) biosynthesis; quinolinate from L-kynurenine: step 3/3. Catalyzes the oxidative ring opening of 3-hydroxyanthranilate to 2-amino-3-carboxymuconate semialdehyde, which spontaneously cyclizes to quinolinate. This is 3-hydroxyanthranilate 3,4-dioxygenase from Bacillus cereus (strain ATCC 10987 / NRS 248).